The chain runs to 26 residues: Melittin (26 aa).

Gly-1 bears the N-formylglycine; partial mark. Glu-26 carries the post-translational modification Glutamic acid 1-amide.

This sequence belongs to the melittin family. As to quaternary structure, monomer (in solution and for integration into membranes), homotetramer (in solution and potentially as a toroidal pore in membranes), and potenially homomultimer (as a toroidal pore in membranes). As to expression, expressed by the venom gland.

It localises to the secreted. The protein localises to the target cell membrane. Its function is as follows. Main toxin of bee venom with strong hemolytic activity and antimicrobial activity. It has enhancing effects on bee venom phospholipase A2 activity. This amphipathic toxin binds to negatively charged membrane surface and forms pore by inserting into lipid bilayers inducing the leakage of ions and molecules and the enhancement of permeability that ultimately leads to cell lysis. It acts as a voltage-gated pore with higher selectivity for anions over cations. The ion conductance has been shown to be voltage-dependent. Self-association of melittin in membranes is promoted by high ionic strength, but not by the presence of negatively charged lipids. In vivo, intradermal injection into healthy human volunteers produce sharp pain sensation and an inflammatory response. It produces pain by activating primary nociceptor cells directly and indirectly due to its ability to activate plasma membrane phospholipase A2 and its pore-forming activity. The chain is Melittin (MELT) from Apis dorsata (Giant honeybee).